The sequence spans 197 residues: Carnitine operon protein CaiE (197 aa).

The interval 177–197 (TAPEANRPRLRGTTEVKPKGQ) is disordered. Basic and acidic residues predominate over residues 188-197 (GTTEVKPKGQ).

It belongs to the transferase hexapeptide repeat family.

It participates in amine and polyamine metabolism; carnitine metabolism. Its function is as follows. Overproduction of CaiE stimulates the activity of CaiB and CaiD. The chain is Carnitine operon protein CaiE from Proteus sp. (strain LE138).